A 245-amino-acid polypeptide reads, in one-letter code: Putative protein phosphatase 2C-like protein 45 (245 aa).

The 188-residue stretch at 1-188 folds into the PPM-type phosphatase domain; sequence MEDRFSTITN…DDISVMLIPL (188 aa).

The protein belongs to the PP2C family.

The polypeptide is Putative protein phosphatase 2C-like protein 45 (Arabidopsis thaliana (Mouse-ear cress)).